The sequence spans 1279 residues: Sterol regulatory element-binding protein cleavage-activating protein (1279 aa).

The Cytoplasmic portion of the chain corresponds to 1-18 (MTLTERLREKISQAFYNH). The chain crosses the membrane as a helical span at residues 19–39 (GLLCASYPIPIILFTGLCILA). The Lumenal portion of the chain corresponds to 40–279 (CCYPLLKLPL…SLVHVHFKEE (240 aa)). The loop-1 stretch occupies residues 46-284 (KLPLPGTGPV…HFKEEIGIAE (239 aa)). Residues 60–81 (PVKDYSPPPSASDHKPGEPSEQ) are disordered. Asparagine 263 is a glycosylation site (N-linked (GlcNAc...) asparagine). The helical transmembrane segment at 280–300 (IGIAELIPLVTTYIILFAYIY) threads the bilayer. One can recognise an SSD domain in the interval 284 to 442 (ELIPLVTTYI…MPFFTTVLSI (159 aa)). Topologically, residues 301–312 (FSTRKIDMVKSK) are cytoplasmic. Residues 313–333 (WGLALAAVVTVLSSLLMSVGL) traverse the membrane as a helical segment. Residues 334 to 344 (CTLFGLTPTLN) are Lumenal-facing. A helical membrane pass occupies residues 345-365 (GGEIFPYLVVVIGLENVLVLT). Residues 366 to 401 (KSVVSTPVDLEVKLRIAQGLSSESWSIMKNMATELG) are Cytoplasmic-facing. The chain crosses the membrane as a helical span at residues 402-422 (IILIGYFTLVPAIQEFCLFAV). Valine 423 is a topological domain (lumenal). Residues 424-444 (GLVSDFFLQMPFFTTVLSIDI) form a helical membrane-spanning segment. Over 445-518 (RRMELADLNK…FLARTRLAQR (74 aa)) the chain is Cytoplasmic. The short motif at 447–452 (MELADL) is the ER export signal element. Residues lysine 454 and lysine 466 each participate in a glycyl lysine isopeptide (Lys-Gly) (interchain with G-Cter in ubiquitin) cross-link. Residues 519-539 (LIMAGTVVWIGILAYTDPAGL) traverse the membrane as a helical segment. Residues 535-710 (DPAGLRTYLA…QAHRDVTLYK (176 aa)) form a loop-7 region. At 540 to 707 (RTYLAAQVTE…GVAQAHRDVT (168 aa)) the chain is on the lumenal side. Residues 588–617 (LENQTLPGEPPEPGGQAEGVHDSPAPEVTW) are disordered. 2 N-linked (GlcNAc...) asparagine glycosylation sites follow: asparagine 590 and asparagine 641. A disordered region spans residues 668-696 (EGRHPQDSRSAWSPPQPAQGGLWDAGPKG). Residues 708-728 (LYKVAALGLATGILLVLLLCL) form a helical membrane-spanning segment. Residues 729–1279 (YRVLCPRNYG…YVPSVLEKLD (551 aa)) lie on the Cytoplasmic side of the membrane. Positions 730–1279 (RVLCPRNYGQ…YVPSVLEKLD (550 aa)) are interaction with SREBF2. A WD 1 repeat occupies 770–810 (VLRGHLMDIECLASDGMLLVSCCLAGHVCVWDAQTGDCLTR). Phosphoserine is present on residues serine 821, serine 837, serine 843, and serine 850. Disordered stretches follow at residues 834 to 868 (ERLS…LFGD), 883 to 903 (HPRL…CRRT), and 925 to 959 (VPMH…GSPS). Over residues 885-896 (RLPELDHPEPRH) the composition is skewed to basic and acidic residues. Residues 929–944 (TPAPRPPSPGPTPPQT) show a composition bias toward pro residues. Residue serine 936 is modified to Phosphoserine. 2 WD repeats span residues 952–1002 (PPEK…LRCS) and 1005–1042 (EVAS…ALSP). The residue at position 1051 (arginine 1051) is an Omega-N-methylarginine. WD repeat units follow at residues 1077–1114 (AHQK…CLFT), 1117–1155 (GHSG…RVSH), 1158–1195 (AHRG…KLYS), and 1197–1235 (QQDL…LLQT).

Belongs to the WD repeat SCAP family. As to quaternary structure, membrane region forms a homotetramer. Component of the SCAP-SREBP complex (composed of SCAP and SREBF1/SREBP1 or SREBF2/SREBP2); interacts with SREBF1/SREBP1 or SREBF2/SREBP2 through its C-terminal cytoplasmic domain. Forms a ternary complex with INSIG1 or INSIG2 through its transmembrane domains at high sterol concentrations. Interacts with PAQR3; the interaction anchors the SCAP-SREBP complex to the Golgi apparatus in low cholesterol conditions. Interacts with the SEC23-SEC24 complex in a SAR1-GTP-dependent manner through an ER export signal in its third cytoplasmic loop. Interacts with RNF139; the interaction inhibits the interaction of SCAP with SEC24B and hampering the ER to Golgi transport of the SCAP-SREBP complex. Interacts with SPRING1. Ubiquitinated at Lys-454 and Lys-466. RNF145 triggers ubiquitination of SCAP, likely inhibiting SCAP-SREBP complex transport to the Golgi apparatus and the subsequent processing/maturation of SREBF2/SREBP2. Widely expressed with higher levels in lung, kidney, gut, brain and adipose tissue. In terms of tissue distribution, expressed in liver and muscle. Isoform 3 expressed in testis. As to expression, expressed in testis.

The protein localises to the endoplasmic reticulum membrane. The protein resides in the golgi apparatus membrane. It localises to the cytoplasmic vesicle. Its subcellular location is the COPII-coated vesicle membrane. Functionally, escort protein required for cholesterol as well as lipid homeostasis. Regulates export of the SCAP-SREBP complex from the endoplasmic reticulum to the Golgi upon low cholesterol, thereby regulating the processing of sterol regulatory element-binding proteins (SREBPs) SREBF1/SREBP1 and SREBF2/SREBP2. At high sterol concentrations, formation of a ternary complex with INSIG (INSIG1 or INSIG2) leads to mask the ER export signal in SCAP, promoting retention of the complex in the endoplasmic reticulum. Low sterol concentrations trigger release of INSIG, a conformational change in the SSD domain of SCAP, unmasking of the ER export signal, promoting recruitment into COPII-coated vesicles and transport of the SCAP-SREBP to the Golgi: in the Golgi, SREBPs are then processed, releasing the transcription factor fragment of SREBPs from the membrane, its import into the nucleus and up-regulation of LDLR, INSIG1 and the mevalonate pathway. Binds cholesterol via its SSD domain. In Sus scrofa (Pig), this protein is Sterol regulatory element-binding protein cleavage-activating protein.